The primary structure comprises 542 residues: Heterogeneous nuclear ribonucleoprotein L-like (542 aa).

Residues 1-71 form a disordered region; sequence MSSSSSSPRE…QPEAGGSHHK (71 aa). Residues 18 to 29 show a composition bias toward basic and acidic residues; the sequence is YESQAKRLKTEE. Residue Lys26 forms a Glycyl lysine isopeptide (Lys-Gly) (interchain with G-Cter in SUMO2) linkage. Ser35 bears the Phosphoserine mark. At Thr46 the chain carries Phosphothreonine. Positions 48-58 are enriched in gly residues; it reads RGGGDGGGGGR. A phosphoserine mark is found at Ser59, Ser68, and Ser75. RRM domains are found at residues 76–150, 166–244, and 335–409; these read PVVH…YSTS, NKVL…YARP, and SVVM…VSKQ. Lys491 participates in a covalent cross-link: Glycyl lysine isopeptide (Lys-Gly) (interchain with G-Cter in SUMO2).

As to quaternary structure, interacts with HNRNPL. In terms of tissue distribution, widely expressed. Detected in bone marrow stroma cells, skeletal muscle, heart, placenta, pancreas, kidney and lung.

In terms of biological role, RNA-binding protein that functions as a regulator of alternative splicing for multiple target mRNAs, including PTPRC/CD45 and STAT5A. Required for alternative splicing of PTPRC. This is Heterogeneous nuclear ribonucleoprotein L-like (HNRNPLL) from Homo sapiens (Human).